The chain runs to 369 residues: MRN complex-interacting protein (369 aa).

The residue at position 115 (Ser115) is a Phosphoserine. Disordered stretches follow at residues 122 to 150, 209 to 245, and 282 to 317; these read GGGVCFNSQPSSETEKPDPPFSTGLPRKR, PSFTQDRAGLAGKGRESSREDLDTMELVPRGEPPCPA, and AQAEQGAPRAQTPREGGLCRLPGARQSPQTTHTPMP. The short motif at 148–151 is the Nuclear localization signal (NLS) element; it reads RKRK. A compositionally biased stretch (basic and acidic residues) spans 221 to 230; the sequence is KGRESSREDL. Residues 223-259 form a necessary for the association with the MRN complex region; the sequence is RESSREDLDTMELVPRGEPPCPAQQVRTMSKWEQCLG.

This sequence belongs to the MRNIP family. In terms of assembly, associates with the MRE11-RAD50-NBN (MRN) damage-sensing complex; this association is constitutive. Interacts with MRE11. Interacts with NBN. Interacts with RAD50. Post-translationally, phosphorylated; phosphorylation is constitutive and occurs in the absence of any DNA-damaging stimulus. Phosphorylation on Ser-115 is necessary for its nuclear retention.

The protein resides in the nucleus. It localises to the nucleoplasm. Functionally, plays a role in the cellular response to DNA damage and the maintenance of genome stability through its association with the MRN damage-sensing complex. Promotes chromatin loading and activity of the MRN complex to facilitate subsequent ATM-mediated DNA damage response signaling and DNA repair. The protein is MRN complex-interacting protein of Bos taurus (Bovine).